The primary structure comprises 585 residues: Phosphomethylpyrimidine synthase (585 aa).

The segment covering 89 to 107 (RGDTESYEGRHVKPEDNGY) has biased composition (basic and acidic residues). The tract at residues 89-116 (RGDTESYEGRHVKPEDNGYRSRNGSHQH) is disordered. Substrate contacts are provided by residues Asn-199, Met-228, Tyr-257, His-293, 313 to 315 (SRG), 354 to 357 (DGLR), and Glu-393. His-397 contacts Zn(2+). Tyr-420 is a binding site for substrate. His-461 is a Zn(2+) binding site. Cys-541, Cys-544, and Cys-549 together coordinate [4Fe-4S] cluster.

This sequence belongs to the ThiC family. [4Fe-4S] cluster is required as a cofactor.

The catalysed reaction is 5-amino-1-(5-phospho-beta-D-ribosyl)imidazole + S-adenosyl-L-methionine = 4-amino-2-methyl-5-(phosphooxymethyl)pyrimidine + CO + 5'-deoxyadenosine + formate + L-methionine + 3 H(+). It participates in cofactor biosynthesis; thiamine diphosphate biosynthesis. Its function is as follows. Catalyzes the synthesis of the hydroxymethylpyrimidine phosphate (HMP-P) moiety of thiamine from aminoimidazole ribotide (AIR) in a radical S-adenosyl-L-methionine (SAM)-dependent reaction. The sequence is that of Phosphomethylpyrimidine synthase from Bacillus pumilus (strain SAFR-032).